Reading from the N-terminus, the 669-residue chain is RNA-binding protein 14 (669 aa).

RRM domains are found at residues 1 to 73 and 79 to 149; these read MKIF…MSRP and WKIF…LSTK. Residues K126, K135, K138, K149, and K153 each participate in a glycyl lysine isopeptide (Lys-Gly) (interchain with G-Cter in SUMO2) cross-link. 2 disordered regions span residues 147–175 and 193–232; these read STKGQKKGPGLAVQSGDKTKKPGAGDTAF and NSTGGFDGQARQPTPPFFGRDRSPLRRSPPRASYVAPLTA. At S161 the chain carries Phosphoserine. At K164 the chain carries N6-acetyllysine; alternate. K164 is covalently cross-linked (Glycyl lysine isopeptide (Lys-Gly) (interchain with G-Cter in SUMO2); alternate). Position 206 is a phosphothreonine (T206). Phosphoserine occurs at positions 220, 242, 244, 256, 272, and 280. The tract at residues 284 to 303 is disordered; sequence PYRGQLASPSSQSAAASSLG. A compositionally biased stretch (low complexity) spans 287–303; it reads GQLASPSSQSAAASSLG. The tract at residues 307 to 354 is TRBP-interacting domain; interaction with STIL; it reads GAQPSASALSSYGGQAAAASSLNSYGAQGSSLASYGNQPSSYGAQAAS. Phosphoserine occurs at positions 520, 523, 527, and 562. Positions 566–590 are disordered; that stretch reads VANANSTPPPYERTRLSPPRASYDD. T572 is subject to Phosphothreonine. Residue S582 is modified to Phosphoserine. K600 participates in a covalent cross-link: Glycyl lysine isopeptide (Lys-Gly) (interchain with G-Cter in SUMO2). A phosphoserine mark is found at S618, S620, S623, S627, S643, and S649.

Isoform 1: Interacts with NCOA6, CITED1 and XRCC5/KU86. Isoform 1: Interacts with SS18 isoform 1. Isoform 1: Interacts with SS18 isoform 2. Interacts with STIL and interferes with its interaction with CPAP. Interacts with gamma-tubulin. Part of the HDP-RNP complex composed of at least HEXIM1, PRKDC, XRCC5, XRCC6, paraspeckle proteins (SFPQ, NONO, PSPC1, RBM14, and MATR3) and NEAT1 RNA. Interacts with RBPMS; the interaction allows cooperative assembly of RNA-bound stable cell-specific alternative splicing regulatory complexes. Expressed in all tissues tested, including brain, heart, skeletal muscle, colon, thymus, spleen, kidney, liver, small intestine, placenta, lung and peripheral blood lymphocytes.

Its subcellular location is the nucleus. It is found in the nucleolus. It localises to the cytoplasm. Isoform 1 may function as a nuclear receptor coactivator, enhancing transcription through other coactivators such as NCOA6 and CITED1. Isoform 2, functions as a transcriptional repressor, modulating transcriptional activities of coactivators including isoform 1, NCOA6 and CITED1. Regulates centriole biogenesis by suppressing the formation of aberrant centriolar protein complexes in the cytoplasm and thus preserving mitotic spindle integrity. Prevents the formation of the STIL-CPAP complex (which can induce the formation of aberrant centriolar protein complexes) by interfering with the interaction of STIL with CPAP. Plays a role in the regulation of DNA virus-mediated innate immune response by assembling into the HDP-RNP complex, a complex that serves as a platform for IRF3 phosphorylation and subsequent innate immune response activation through the cGAS-STING pathway. Also involved in the regulation of pre-mRNA alternative splicing. The protein is RNA-binding protein 14 (RBM14) of Homo sapiens (Human).